A 215-amino-acid chain; its full sequence is Adenylate kinase (215 aa).

Residue 10–15 coordinates ATP; sequence GAGKGT. The NMP stretch occupies residues 30–59; that stretch reads STGDMFRAAMKNNTELGKKAKSFMDNGDLV. AMP-binding positions include Thr-31, Arg-36, 57-59, 85-88, and Gln-92; these read DLV and GFPR. The LID stretch occupies residues 126–163; that stretch reads GRWICRTCGKTYHEIYNPPKVPGKCDLDGGELYQRDDD. Arg-127 contacts ATP. Cys-130 and Cys-133 together coordinate Zn(2+). 136–137 provides a ligand contact to ATP; the sequence is TY. 2 residues coordinate Zn(2+): Cys-150 and Asp-153. Residues Arg-160 and Arg-171 each contribute to the AMP site. Gln-199 provides a ligand contact to ATP.

The protein belongs to the adenylate kinase family. As to quaternary structure, monomer.

Its subcellular location is the cytoplasm. It carries out the reaction AMP + ATP = 2 ADP. The protein operates within purine metabolism; AMP biosynthesis via salvage pathway; AMP from ADP: step 1/1. Its function is as follows. Catalyzes the reversible transfer of the terminal phosphate group between ATP and AMP. Plays an important role in cellular energy homeostasis and in adenine nucleotide metabolism. In Listeria monocytogenes serotype 4b (strain CLIP80459), this protein is Adenylate kinase.